A 487-amino-acid polypeptide reads, in one-letter code: UDP-N-acetylmuramate--L-alanine ligase (487 aa).

130–136 (GTHGKTT) lines the ATP pocket.

Belongs to the MurCDEF family.

The protein resides in the cytoplasm. The enzyme catalyses UDP-N-acetyl-alpha-D-muramate + L-alanine + ATP = UDP-N-acetyl-alpha-D-muramoyl-L-alanine + ADP + phosphate + H(+). It participates in cell wall biogenesis; peptidoglycan biosynthesis. Its function is as follows. Cell wall formation. The protein is UDP-N-acetylmuramate--L-alanine ligase of Photobacterium profundum (strain SS9).